We begin with the raw amino-acid sequence, 307 residues long: Mitochondrial brown fat uncoupling protein 1 (307 aa).

Over 1–10 (MVSQTTSEVQ) the chain is Mitochondrial intermembrane. Residues 11-32 (PTMGVKIFSAGVAACLADIITF) traverse the membrane as a helical segment. Solcar repeat units follow at residues 11–102 (PTMG…VQEY), 111–201 (PTLV…MKGA), and 210–295 (DDVP…LKKE). At 33-73 (PLDTAKVRLQIQGEGQTSSTIRYKGVLGTITTLAKTEGLPK) the chain is on the mitochondrial matrix side. Lys-56 contributes to the fatty acid 16:0 binding site. Residues 74–96 (LYSGLPAGIQRQISFASLRIGLY) form a helical membrane-spanning segment. Topologically, residues 97 to 116 (DTVQEYFSSGKETPPTLVNR) are mitochondrial intermembrane. The helical transmembrane segment at 117 to 133 (ISAGLMTGGVAVFIGQP) threads the bilayer. Residues 134-178 (TEVVKVRLQAQSHLHGIKPRYTGTYNAYRIIATTESLSTLWKGTT) lie on the Mitochondrial matrix side of the membrane. A helical transmembrane segment spans residues 179–195 (PNLLRNVIINCTELVTY). Over 196–212 (DLMKGALVNNQILADDV) the chain is Mitochondrial intermembrane. A helical transmembrane segment spans residues 213–232 (PCHLLSALVAGFCTTFLASP). At 233-266 (ADVVKTRFINSLPGQYPSVPSCAMTMFTKEGPTA) the chain is on the mitochondrial matrix side. Residue Cys-254 is modified to Cysteine sulfenic acid (-SOH). Residues 267-289 (FFKGFVPSFLRLASWNVIMFVCF) traverse the membrane as a helical segment. Residue Lys-269 coordinates fatty acid 16:0. Topologically, residues 290 to 307 (EQLKKELMKSRQTVDCTT) are mitochondrial intermembrane.

Belongs to the mitochondrial carrier (TC 2.A.29) family. As to quaternary structure, most probably functions as a monomer. Binds one purine nucleotide per monomer. However, has also been suggested to function as a homodimer or a homotetramer. Tightly associates with cardiolipin in the mitochondrion inner membrane; may stabilize and regulate its activity. In terms of processing, may undergo sulfenylation upon cold exposure. May increase the sensitivity of UCP1 thermogenic function to the activation by noradrenaline probably through structural effects. May undergo ubiquitin-mediated proteasomal degradation. In terms of tissue distribution, brown adipose tissue.

Its subcellular location is the mitochondrion inner membrane. The enzyme catalyses H(+)(in) = H(+)(out). Has no constitutive proton transporter activity and has to be activated by long-chain fatty acids/LCFAs. Inhibited by purine nucleotides. Both purine nucleotides and LCFAs bind the cytosolic side of the transporter and directly compete to activate or inhibit it. Activated by noradrenaline and reactive oxygen species. Despite lacking canonical translational encoding for selenocysteine, a small pool of the protein has been observed to selectively incorporate selenocysteine at 'Cys-254'. Selenocysteine-modified protein is highly sensitive to redox modification and may constitute a pool of protein highly sensitive to activation by elevated levels of reactive oxygen species (ROS). Mitochondrial protein responsible for thermogenic respiration, a specialized capacity of brown adipose tissue and beige fat that participates in non-shivering adaptive thermogenesis to temperature and diet variations and more generally to the regulation of energy balance. Functions as a long-chain fatty acid/LCFA and proton symporter, simultaneously transporting one LCFA and one proton through the inner mitochondrial membrane. However, LCFAs remaining associated with the transporter via their hydrophobic tails, it results in an apparent transport of protons activated by LCFAs. Thereby, dissipates the mitochondrial proton gradient and converts the energy of substrate oxydation into heat instead of ATP. Regulates the production of reactive oxygen species/ROS by mitochondria. In Phodopus sungorus (Striped hairy-footed hamster), this protein is Mitochondrial brown fat uncoupling protein 1.